Consider the following 376-residue polypeptide: tRNA-specific 2-thiouridylase MnmA (376 aa).

Residues Ala16–Ser23 and Leu42 contribute to the ATP site. Cys111 serves as the catalytic Nucleophile. A disulfide bridge links Cys111 with Cys210. Gly135 provides a ligand contact to ATP. The interaction with tRNA stretch occupies residues Lys158–Gln160. The active-site Cysteine persulfide intermediate is Cys210.

The protein belongs to the MnmA/TRMU family.

The protein localises to the cytoplasm. It carries out the reaction S-sulfanyl-L-cysteinyl-[protein] + uridine(34) in tRNA + AH2 + ATP = 2-thiouridine(34) in tRNA + L-cysteinyl-[protein] + A + AMP + diphosphate + H(+). Its function is as follows. Catalyzes the 2-thiolation of uridine at the wobble position (U34) of tRNA, leading to the formation of s(2)U34. The chain is tRNA-specific 2-thiouridylase MnmA from Streptomyces coelicolor (strain ATCC BAA-471 / A3(2) / M145).